Here is a 277-residue protein sequence, read N- to C-terminus: Basic leucine zipper 9 (277 aa).

The tract at residues 73 to 141 (ADSPVSANKP…ESAKRSRRRK (69 aa)) is disordered. Ser-100 carries the phosphoserine modification. Over residues 109-118 (AGQSEMTNDP) the composition is skewed to polar residues. Residues 120–183 (DLKRIRRMNS…RSAGTNNRVL (64 aa)) form the bZIP domain. Residues 122–141 (KRIRRMNSNRESAKRSRRRK) are basic motif. Positions 124-131 (IRRMNSNR) match the Nuclear localization signal motif. The tract at residues 148 to 162 (LETQVDSLKGDNSTL) is leucine-zipper.

Belongs to the bZIP family. In terms of assembly, homodimer. Interacts with BZIP1, BZIP2, BZIP10, BZIP11, BZIP25, BZIP44, BZIP53 and BZIP63. Phosphorylated. Expressed in roots, shoots, stems, young leaves, and flowers, mostly in vascular tissues (e.g. phloem).

The protein resides in the nucleus. In terms of biological role, transcription factor. This Arabidopsis thaliana (Mouse-ear cress) protein is Basic leucine zipper 9 (BZIP9).